Consider the following 891-residue polypeptide: Longitudinals lacking protein, isoform G (891 aa).

In terms of domain architecture, BTB spans Val-32 to Gln-97. 2 disordered regions span residues Leu-115–Leu-200 and Ser-228–Ser-340. Ser-140 bears the Phosphoserine mark. Thr-161 is modified (phosphothreonine). Residues Ser-162 and Ser-168 each carry the phosphoserine modification. Composition is skewed to low complexity over residues Ser-162–Pro-175, Ser-228–Thr-251, Thr-263–Ser-293, and Asn-329–Ser-340. 3 positions are modified to phosphoserine: Ser-372, Ser-375, and Ser-378. The disordered stretch occupies residues Gln-446–Ala-467. Residues Gln-449 to Thr-462 are compositionally biased toward basic and acidic residues. 2 positions are modified to phosphoserine: Ser-696 and Ser-705. Position 706 is a phosphothreonine (Thr-706). Residues Ser-749 and Ser-750 each carry the phosphoserine modification. The C2H2-type 1; degenerate zinc-finger motif lies at Tyr-791–Glu-813. The segment at His-821–His-843 adopts a C2H2-type 2 zinc-finger fold. Residues Val-840–Lys-891 are disordered. A Phosphoserine modification is found at Ser-874.

As to expression, expressed in both mesoderm and ectoderm with expression highest in the mesectoderm by stage 11. Becomes enriched in a cluster of brain cells, in abdominal histoblasts, and in the embryonic imaginal disks during later stages.

The protein localises to the nucleus. Putative transcription factor required for axon growth and guidance in the central and peripheral nervous systems. Repels CNS axons away from the midline by promoting the expression of the midline repellent sli and its receptor robo. The protein is Longitudinals lacking protein, isoform G of Drosophila melanogaster (Fruit fly).